Reading from the N-terminus, the 191-residue chain is UMP-CMP kinase 2 (191 aa).

12–17 (GSGKGT) contacts ATP. The interval 32–62 (SAGDLLRAERQREGSEFGALIESHIKNGSIV) is NMP. A ribonucleoside 5'-phosphate-binding positions include Arg38, 60 to 62 (SIV), and 88 to 91 (GFPR). Position 95 (Asn95) interacts with CMP. The segment at 128 to 136 (NRGQGRTDD) is LID. Residue Arg129 coordinates ATP. Residues Arg133 and Arg144 each contribute to the a ribonucleoside 5'-phosphate site. ATP is bound at residue Arg172.

The protein belongs to the adenylate kinase family. UMP-CMP kinase subfamily. As to quaternary structure, monomer. The cofactor is Mg(2+). As to expression, expressed in neurons and the pharynx.

Its subcellular location is the cytoplasm. It localises to the nucleus. It catalyses the reaction CMP + ATP = CDP + ADP. The catalysed reaction is dCMP + ATP = dCDP + ADP. It carries out the reaction UMP + ATP = UDP + ADP. In terms of biological role, catalyzes the phosphorylation of pyrimidine nucleoside monophosphates at the expense of ATP. Plays an important role in de novo pyrimidine nucleotide biosynthesis. Has preference for UMP and CMP as phosphate acceptors. The sequence is that of UMP-CMP kinase 2 from Caenorhabditis elegans.